Consider the following 139-residue polypeptide: MDPLSAASKIAGSGLEVQSTRLRIVSENIANARSTGDTPGADPYRRKTVTFGSELDHVSGVERVKVKKLGVDRGDFVHEYDPGNPAADTNGMVKMPNVNVLIEMADMREANRSYDANLQVIRQTRDLVASTIDLLKASQ.

Belongs to the flagella basal body rod proteins family. In terms of assembly, the basal body constitutes a major portion of the flagellar organelle and consists of four rings (L,P,S, and M) mounted on a central rod. The rod consists of about 26 subunits of FlgG in the distal portion, and FlgB, FlgC and FlgF are thought to build up the proximal portion of the rod with about 6 subunits each.

The protein resides in the bacterial flagellum basal body. This chain is Flagellar basal-body rod protein FlgC (flgC), found in Agrobacterium fabrum (strain C58 / ATCC 33970) (Agrobacterium tumefaciens (strain C58)).